Consider the following 614-residue polypeptide: Threonine--tRNA ligase (614 aa).

The interval 1-141 is editing domain; that stretch reads MRLLLIHSDY…LSKTIVPGEE (141 aa). Positions 198–490 are catalytic; it reads AHVDLMRSKE…ISTQKVPALP (293 aa). Residues Cys290, His342, and His463 each contribute to the Zn(2+) site.

The protein belongs to the class-II aminoacyl-tRNA synthetase family. Homodimer. It depends on Zn(2+) as a cofactor.

It is found in the cytoplasm. The enzyme catalyses tRNA(Thr) + L-threonine + ATP = L-threonyl-tRNA(Thr) + AMP + diphosphate + H(+). Its function is as follows. Catalyzes the attachment of threonine to tRNA(Thr) in a two-step reaction: L-threonine is first activated by ATP to form Thr-AMP and then transferred to the acceptor end of tRNA(Thr). Also edits incorrectly charged L-seryl-tRNA(Thr). The sequence is that of Threonine--tRNA ligase from Methanoregula boonei (strain DSM 21154 / JCM 14090 / 6A8).